The following is a 278-amino-acid chain: Bifunctional protein FolD (278 aa).

Residues 165–167 (GRS), S190, and T231 contribute to the NADP(+) site.

Belongs to the tetrahydrofolate dehydrogenase/cyclohydrolase family. As to quaternary structure, homodimer.

The catalysed reaction is (6R)-5,10-methylene-5,6,7,8-tetrahydrofolate + NADP(+) = (6R)-5,10-methenyltetrahydrofolate + NADPH. It carries out the reaction (6R)-5,10-methenyltetrahydrofolate + H2O = (6R)-10-formyltetrahydrofolate + H(+). The protein operates within one-carbon metabolism; tetrahydrofolate interconversion. In terms of biological role, catalyzes the oxidation of 5,10-methylenetetrahydrofolate to 5,10-methenyltetrahydrofolate and then the hydrolysis of 5,10-methenyltetrahydrofolate to 10-formyltetrahydrofolate. The polypeptide is Bifunctional protein FolD (Clostridium novyi (strain NT)).